The following is a 360-amino-acid chain: 3-isopropylmalate dehydrogenase (360 aa).

Positions 66 to 75 (RCHPARRRRR) are enriched in basic residues. The disordered stretch occupies residues 66-101 (RCHPARRRRRSEMGRHRPGHPPGARPAENPFATGPV). Substrate is bound by residues Arg133 and Asp223. Asp223, Asp247, and Asp251 together coordinate Mg(2+).

It belongs to the isocitrate and isopropylmalate dehydrogenases family. LeuB type 1 subfamily. In terms of assembly, homodimer. Mg(2+) serves as cofactor. Mn(2+) is required as a cofactor.

The protein resides in the cytoplasm. It carries out the reaction (2R,3S)-3-isopropylmalate + NAD(+) = 4-methyl-2-oxopentanoate + CO2 + NADH. It participates in amino-acid biosynthesis; L-leucine biosynthesis; L-leucine from 3-methyl-2-oxobutanoate: step 3/4. In terms of biological role, catalyzes the oxidation of 3-carboxy-2-hydroxy-4-methylpentanoate (3-isopropylmalate) to 3-carboxy-4-methyl-2-oxopentanoate. The product decarboxylates to 4-methyl-2 oxopentanoate. This Azotobacter vinelandii protein is 3-isopropylmalate dehydrogenase (leuB).